A 182-amino-acid polypeptide reads, in one-letter code: Large ribosomal subunit protein uL6 (182 aa).

This sequence belongs to the universal ribosomal protein uL6 family. Part of the 50S ribosomal subunit.

Its function is as follows. This protein binds to the 23S rRNA, and is important in its secondary structure. It is located near the subunit interface in the base of the L7/L12 stalk, and near the tRNA binding site of the peptidyltransferase center. The chain is Large ribosomal subunit protein uL6 from Methanococcus maripaludis (strain C7 / ATCC BAA-1331).